A 480-amino-acid polypeptide reads, in one-letter code: Glycogen synthase (480 aa).

Lys-15 is an ADP-alpha-D-glucose binding site.

It belongs to the glycosyltransferase 1 family. Bacterial/plant glycogen synthase subfamily.

It carries out the reaction [(1-&gt;4)-alpha-D-glucosyl](n) + ADP-alpha-D-glucose = [(1-&gt;4)-alpha-D-glucosyl](n+1) + ADP + H(+). The protein operates within glycan biosynthesis; glycogen biosynthesis. Its function is as follows. Synthesizes alpha-1,4-glucan chains using ADP-glucose. This chain is Glycogen synthase, found in Rhizobium johnstonii (strain DSM 114642 / LMG 32736 / 3841) (Rhizobium leguminosarum bv. viciae).